Reading from the N-terminus, the 190-residue chain is Potassium-transporting ATPase KdpC subunit (190 aa).

The helical transmembrane segment at 6 to 26 (PAVFLVLLLTLITGLLYPLLT) threads the bilayer. Residues 67–88 (GRPSATSDRPYNPLASSGSNLA) are disordered. Residues 69 to 88 (PSATSDRPYNPLASSGSNLA) are compositionally biased toward polar residues.

Belongs to the KdpC family. In terms of assembly, the system is composed of three essential subunits: KdpA, KdpB and KdpC.

Its subcellular location is the cell inner membrane. Part of the high-affinity ATP-driven potassium transport (or Kdp) system, which catalyzes the hydrolysis of ATP coupled with the electrogenic transport of potassium into the cytoplasm. This subunit acts as a catalytic chaperone that increases the ATP-binding affinity of the ATP-hydrolyzing subunit KdpB by the formation of a transient KdpB/KdpC/ATP ternary complex. This is Potassium-transporting ATPase KdpC subunit from Erwinia tasmaniensis (strain DSM 17950 / CFBP 7177 / CIP 109463 / NCPPB 4357 / Et1/99).